We begin with the raw amino-acid sequence, 192 residues long: MYQDLIHNELNEAAETLANFLKDDANIHAIQRAAVLLADSFKAGGKVLSCGNGGSHCDAMHFAEELTGRYRENRPGYPAIAISDVSHISCVSNDFGYDYIFSRYVEAVGREGDVLLGISTSGNSGNVIKAIAAAREKGMKVITLTGKDGGKMAGTADIEIRVPHFGYADRIQEIHIKVIHILIQLIEKEMVK.

The SIS domain maps to 37–192 (LADSFKAGGK…IQLIEKEMVK (156 aa)). 52–54 (NGG) lines the substrate pocket. 2 residues coordinate Zn(2+): His61 and Glu65. Residues Glu65, 93–94 (ND), 119–121 (STS), Ser124, and Gln172 each bind substrate. Zn(2+)-binding residues include Gln172 and His180.

It belongs to the SIS family. GmhA subfamily. As to quaternary structure, homotetramer. It depends on Zn(2+) as a cofactor.

It is found in the cytoplasm. The enzyme catalyses 2 D-sedoheptulose 7-phosphate = D-glycero-alpha-D-manno-heptose 7-phosphate + D-glycero-beta-D-manno-heptose 7-phosphate. It functions in the pathway carbohydrate biosynthesis; D-glycero-D-manno-heptose 7-phosphate biosynthesis; D-glycero-alpha-D-manno-heptose 7-phosphate and D-glycero-beta-D-manno-heptose 7-phosphate from sedoheptulose 7-phosphate: step 1/1. Catalyzes the isomerization of sedoheptulose 7-phosphate in D-glycero-D-manno-heptose 7-phosphate. This chain is Phosphoheptose isomerase, found in Salmonella dublin (strain CT_02021853).